The primary structure comprises 967 residues: Vitamin B12-dependent ribonucleotide reductase (967 aa).

Residues 1 to 23 are disordered; it reads MTETASGPARSSRAKGTKAGKGL. Residues Ser-143, 159–160, Gly-188, 364–368, and 554–558 each bind substrate; these read AC, NPCSE, and PTGTI. A disulfide bridge links Cys-160 with Cys-377. Catalysis depends on Asn-364, which acts as the Proton acceptor. The active-site Cysteine radical intermediate is Cys-366. Catalysis depends on Glu-368, which acts as the Proton acceptor.

It belongs to the ribonucleoside diphosphate reductase class-2 family. Requires adenosylcob(III)alamin as cofactor.

It catalyses the reaction a 2'-deoxyribonucleoside 5'-diphosphate + [thioredoxin]-disulfide + H2O = a ribonucleoside 5'-diphosphate + [thioredoxin]-dithiol. Catalyzes the reduction of ribonucleotides to deoxyribonucleotides. May function to provide a pool of deoxyribonucleotide precursors for DNA repair during oxygen limitation and/or for immediate growth after restoration of oxygen. This chain is Vitamin B12-dependent ribonucleotide reductase (nrdJ), found in Streptomyces coelicolor (strain ATCC BAA-471 / A3(2) / M145).